A 366-amino-acid chain; its full sequence is Chorismate synthase (366 aa).

Residues Arg48 and Arg54 each coordinate NADP(+). FMN is bound by residues 125–127, 238–239, Gly278, 293–297, and Arg319; these read RSS, NA, and KPTSS.

The protein belongs to the chorismate synthase family. Homotetramer. It depends on FMNH2 as a cofactor.

It catalyses the reaction 5-O-(1-carboxyvinyl)-3-phosphoshikimate = chorismate + phosphate. It participates in metabolic intermediate biosynthesis; chorismate biosynthesis; chorismate from D-erythrose 4-phosphate and phosphoenolpyruvate: step 7/7. Functionally, catalyzes the anti-1,4-elimination of the C-3 phosphate and the C-6 proR hydrogen from 5-enolpyruvylshikimate-3-phosphate (EPSP) to yield chorismate, which is the branch point compound that serves as the starting substrate for the three terminal pathways of aromatic amino acid biosynthesis. This reaction introduces a second double bond into the aromatic ring system. The sequence is that of Chorismate synthase from Burkholderia ambifaria (strain MC40-6).